A 245-amino-acid chain; its full sequence is tRNA pseudouridine synthase A (245 aa).

The Nucleophile role is filled by aspartate 52. Residue tyrosine 110 participates in substrate binding.

The protein belongs to the tRNA pseudouridine synthase TruA family. In terms of assembly, homodimer.

It carries out the reaction uridine(38/39/40) in tRNA = pseudouridine(38/39/40) in tRNA. In terms of biological role, formation of pseudouridine at positions 38, 39 and 40 in the anticodon stem and loop of transfer RNAs. The chain is tRNA pseudouridine synthase A from Pseudothermotoga lettingae (strain ATCC BAA-301 / DSM 14385 / NBRC 107922 / TMO) (Thermotoga lettingae).